We begin with the raw amino-acid sequence, 427 residues long: Transcription termination factor Rho (427 aa).

Residues 55–130 (YFFGEGVLEI…IKIEAINYRP (76 aa)) enclose the Rho RNA-BD domain. Residues 173-178 (GKGQRG), 185-190 (KAGKTT), and R216 contribute to the ATP site.

This sequence belongs to the Rho family. Homohexamer. The homohexamer assembles into an open ring structure.

Functionally, facilitates transcription termination by a mechanism that involves Rho binding to the nascent RNA, activation of Rho's RNA-dependent ATPase activity, and release of the mRNA from the DNA template. The protein is Transcription termination factor Rho of Thermotoga maritima (strain ATCC 43589 / DSM 3109 / JCM 10099 / NBRC 100826 / MSB8).